Here is a 297-residue protein sequence, read N- to C-terminus: tRNA pseudouridine synthase B (297 aa).

The Nucleophile role is filled by D44.

Belongs to the pseudouridine synthase TruB family. Type 1 subfamily.

It carries out the reaction uridine(55) in tRNA = pseudouridine(55) in tRNA. Functionally, responsible for synthesis of pseudouridine from uracil-55 in the psi GC loop of transfer RNAs. This is tRNA pseudouridine synthase B from Corynebacterium glutamicum (strain R).